A 329-amino-acid polypeptide reads, in one-letter code: Prostaglandin reductase 1 (329 aa).

Threonine 18 is modified (phosphothreonine). Residue serine 20 is modified to Phosphoserine. Residues 152–155, lysine 178, tyrosine 193, asparagine 217, 239–245, 270–272, and asparagine 321 contribute to the NADP(+) site; these read GAVG, CGAISVY, and FIV. At lysine 178 the chain carries N6-(2-hydroxyisobutyryl)lysine; alternate. Lysine 178 bears the N6-acetyllysine; alternate mark.

Belongs to the NADP-dependent oxidoreductase L4BD family. As to quaternary structure, monomer or homodimer. Detected in small intestine, kidney, liver, spleen and stomach (at protein level). Detected in small intestine, kidney and liver.

The protein resides in the cytoplasm. It carries out the reaction 13,14-dihydro-15-oxo-prostaglandin E1 + NADP(+) = 15-oxoprostaglandin E1 + NADPH + H(+). It catalyses the reaction 13,14-dihydro-15-oxo-prostaglandin E2 + NAD(+) = 15-oxoprostaglandin E2 + NADH + H(+). The catalysed reaction is 13,14-dihydro-15-oxo-prostaglandin F1alpha + NADP(+) = 15-oxoprostaglandin F1alpha + NADPH + H(+). The enzyme catalyses 13,14-dihydro-15-oxo-PGF2alpha + NADP(+) = 15-oxoprostaglandin F2alpha + NADPH + H(+). It carries out the reaction leukotriene B4 + NADP(+) = 12-oxo-leukotriene B4 + NADPH + H(+). It catalyses the reaction 20-hydroxy-leukotriene B4 + NADP(+) = 12-oxo-20-hydroxy-leukotriene B4 + NADPH + H(+). The catalysed reaction is 6-trans-leukotriene B4 + NADP(+) = 12-oxo-(5S)-hydroxy-(6E,8E,10E,14Z)-eicosatetraenoate + NADPH + H(+). The enzyme catalyses (5S,12S)-dihydroxy-(6E,10E,12E,14Z)-eicosatetraenoate + NADP(+) = 12-oxo-(5S)-hydroxy-(6E,8E,10E,14Z)-eicosatetraenoate + NADPH + H(+). It carries out the reaction an n-alkanal + NADP(+) = an alk-2-enal + NADPH + H(+). It catalyses the reaction hexanal + NADP(+) = (E)-hex-2-enal + NADPH + H(+). The catalysed reaction is octanal + NADP(+) = (2E)-octenal + NADPH + H(+). The enzyme catalyses decanal + NADP(+) = (2E)-decenal + NADPH + H(+). It carries out the reaction dodecanal + NADP(+) = (2E)-dodecenal + NADPH + H(+). It catalyses the reaction 4-hydroxynonanal + NADP(+) = (E)-4-hydroxynon-2-enal + NADPH + H(+). The catalysed reaction is pentan-2-one + NADP(+) = (E)-pent-3-en-2-one + NADPH + H(+). The enzyme catalyses nonan-2-one + NADP(+) = (3E)-nonen-2-one + NADPH + H(+). NAD(P)H-dependent oxidoreductase involved in metabolic inactivation of pro- and anti-inflammatory eicosanoids: prostaglandins (PG), leukotrienes (LT) and lipoxins (LX). Catalyzes with high efficiency the reduction of the 13,14 double bond of 15-oxoPGs, including 15-oxo-PGE1, 15-oxo-PGE2, 15-oxo-PGF1-alpha and 15-oxo-PGF2-alpha. Catalyzes with lower efficiency the oxidation of the hydroxyl group at C12 of LTB4 and its derivatives, converting them into biologically less active 12-oxo-LTB4 metabolites. Reduces 15-oxo-LXA4 to 13,14 dihydro-15-oxo-LXA4, enhancing neutrophil recruitment at the inflammatory site. Plays a role in metabolic detoxification of alkenals and ketones. Reduces alpha,beta-unsaturated alkenals and ketones, particularly those with medium-chain length, showing highest affinity toward (2E)-decenal and (3E)-3-nonen-2-one. May inactivate 4-hydroxy-2-nonenal, a cytotoxic lipid constituent of oxidized low-density lipoprotein particles. This Cavia porcellus (Guinea pig) protein is Prostaglandin reductase 1 (Ptgr1).